Consider the following 122-residue polypeptide: Small ribosomal subunit protein uS13 (122 aa).

The segment at 91-122 (RHRRGLPVHGQRTKTNARTRKGPKRTVAGKKK) is disordered.

Belongs to the universal ribosomal protein uS13 family. Part of the 30S ribosomal subunit. Forms a loose heterodimer with protein S19. Forms two bridges to the 50S subunit in the 70S ribosome.

Functionally, located at the top of the head of the 30S subunit, it contacts several helices of the 16S rRNA. In the 70S ribosome it contacts the 23S rRNA (bridge B1a) and protein L5 of the 50S subunit (bridge B1b), connecting the 2 subunits; these bridges are implicated in subunit movement. Contacts the tRNAs in the A and P-sites. This chain is Small ribosomal subunit protein uS13, found in Kocuria rhizophila (strain ATCC 9341 / DSM 348 / NBRC 103217 / DC2201).